The primary structure comprises 207 residues: Adenylyl-sulfate kinase (207 aa).

39–46 (GLSGAGKS) is a binding site for ATP. S113 acts as the Phosphoserine intermediate in catalysis.

The protein belongs to the APS kinase family.

It catalyses the reaction adenosine 5'-phosphosulfate + ATP = 3'-phosphoadenylyl sulfate + ADP + H(+). It participates in sulfur metabolism; hydrogen sulfide biosynthesis; sulfite from sulfate: step 2/3. Functionally, catalyzes the synthesis of activated sulfate. This is Adenylyl-sulfate kinase from Vibrio vulnificus (strain CMCP6).